A 621-amino-acid polypeptide reads, in one-letter code: Microbial serine proteinase (621 aa).

The first 24 residues, 1–24 (MRKTSLALAISALLSALPIASVQA), serve as a signal peptide directing secretion. The Peptidase S8 domain occupies 68–440 (PRGGMAGNDL…FGLVDVNKTQ (373 aa)). The active-site Charge relay system is the D98. Positions 114-133 (PGSKNVVTGGSDPTPTDPDR) are disordered. Active-site charge relay system residues include H137 and S354. The 166-residue stretch at 454–619 (AVALAKGKGN…GYSVLGHDAA (166 aa)) folds into the P/Homo B domain. The tract at residues 457-485 (LAKGKGNGRSPSAPSRYVGSSPTRSSTQV) is disordered. Polar residues predominate over residues 465–485 (RSPSAPSRYVGSSPTRSSTQV).

Belongs to the peptidase S8 family.

Agent of furonculosis. This is Microbial serine proteinase (aspA) from Aeromonas salmonicida.